We begin with the raw amino-acid sequence, 129 residues long: Thylakoid-associated single-stranded DNA-binding protein slr1034 (129 aa).

One can recognise an SSB domain in the interval 1 to 100 (MNSFVLMATV…LTASRISLVD (100 aa)). A disordered region spans residues 99–129 (VDSGNGINPGELSSPPEPEAVDLSNTDDIPF).

In terms of assembly, homotetramer.

The protein localises to the cellular thylakoid membrane. The polypeptide is Thylakoid-associated single-stranded DNA-binding protein slr1034 (Synechocystis sp. (strain ATCC 27184 / PCC 6803 / Kazusa)).